A 218-amino-acid polypeptide reads, in one-letter code: Elongation factor Ts (218 aa).

The involved in Mg(2+) ion dislocation from EF-Tu stretch occupies residues 82 to 85 (TDFV).

This sequence belongs to the EF-Ts family.

The protein localises to the cytoplasm. Functionally, associates with the EF-Tu.GDP complex and induces the exchange of GDP to GTP. It remains bound to the aminoacyl-tRNA.EF-Tu.GTP complex up to the GTP hydrolysis stage on the ribosome. The sequence is that of Elongation factor Ts from Prochlorococcus marinus (strain NATL1A).